Here is a 417-residue protein sequence, read N- to C-terminus: Interferon-gamma-inducible GTPase 10 (417 aa).

Residue Gly2 is the site of N-myristoyl glycine attachment. The 183-residue stretch at 67-249 (APLNIAVTGE…PSLESTLLEE (183 aa)) folds into the IRG-type G domain. The GDP site is built by Gly78, Ala79, Ser82, Thr83, Ser101, Lys183, Asp185, and Ser231. Transmembrane regions (helical) follow at residues 284-302 (EALK…FFND) and 370-387 (AVTG…KSYY).

This sequence belongs to the TRAFAC class dynamin-like GTPase superfamily. GB1/RHD3 GTPase family. GB1 subfamily. In terms of assembly, homooligomer; homooligomerization occurs upon GTP-binding and is required for the association with membranous structures. Homodimer; GDP-binding induces formation of an inactive head-to-head homodimer. Myristoylation is required for localization to pathogen-containing vacuoles. In terms of processing, (Microbial infection) Phosphorylated by Toxoplasma gondii ROP18.

It localises to the membrane. The protein resides in the cytoplasmic vesicle membrane. It carries out the reaction GTP + H2O = GDP + phosphate + H(+). Its function is as follows. Interferon (IFN)-inducible GTPase that plays important roles in innate immunity against a diverse range of bacterial, viral and protozoan pathogens by mediating cytosolic release of pathogenic ligands that activate the inflammasomes. Following infection, recruited to the membrane of pathogens in a GBP-dependent manner and mediates disruption of the pathogen membrane, liberating ligands that are detected by inflammasomes, such as lipopolysaccharide (LPS) that activates the non-canonical CASP4/CASP11 inflammasome or double-stranded DNA (dsDNA) that activates the AIM2 inflammasome. Promotes AIM2 and NLRP3 inflammasome activation following A.fumigatus infection by liberating beta-glucan, which directly triggers inflammasome assembly. Promotes NLRP3 inflammasome activation following influenza A virus infection. This chain is Interferon-gamma-inducible GTPase 10, found in Mus musculus (Mouse).